The sequence spans 239 residues: Venom nerve growth factor (239 aa).

Positions 1–18 are cleaved as a signal peptide; that stretch reads MSMLCYTLIIAFLIGIWA. Residues 19–125 constitute a propeptide that is removed on maturation; it reads APKSEDNVPL…ALNRNIQAKR (107 aa). Over residues 47-66 the composition is skewed to basic and acidic residues; the sequence is GLKTSRNTDQRHPAPKKADD. Residues 47–68 are disordered; the sequence is GLKTSRNTDQRHPAPKKADDQE. 3 disulfide bridges follow: C139/C203, C181/C231, and C191/C233.

The protein belongs to the NGF-beta family. In terms of assembly, homodimer; non-covalently linked. In terms of tissue distribution, expressed by the venom gland.

It localises to the secreted. Nerve growth factor is important for the development and maintenance of the sympathetic and sensory nervous systems. It stimulates division and differentiation of sympathetic and embryonic sensory neurons as well as basal forebrain cholinergic neurons in the brain. Its relevance in the snake venom is not clear. However, it has been shown to inhibit metalloproteinase-dependent proteolysis of platelet glycoprotein Ib alpha, suggesting a metalloproteinase inhibition to prevent metalloprotease autodigestion and/or protection against prey proteases. Binds a lipid between the two protein chains in the homodimer. The lipid-bound form promotes histamine relase from mouse mast cells, contrary to the lipid-free form. The polypeptide is Venom nerve growth factor (Pseudechis porphyriacus (Red-bellied black snake)).